A 298-amino-acid polypeptide reads, in one-letter code: MQLEKMITEGSNTASAEIDRVSTLEMCRIINDEDKTVPLAVERVLPDIAAAIDVIHAQVSGGGRLIYLGAGTSGRLGILDASECPPTYGVKPGLVVGLIAGGEYAIQHAVEGAEDSREGGVNDLKNINLTAQDVVVGIAASGRTPYVIAGLEYARQLGCRTVGISCNPGSAVSTTAEFAITPIVGAEVVTGSSRMKAGTAQKLVLNMLSTGLMIKSGKVFGNLMVDVVATNEKLHVRQVNIVKNATGCNAEQAEAALIACERNCKTAIVMVLKNLDAAEAKKRLDQHGGFIRQVLDKE.

The SIS domain occupies 55 to 218 (IHAQVSGGGR…STGLMIKSGK (164 aa)). Glu83 serves as the catalytic Proton donor. Glu114 is an active-site residue.

Belongs to the GCKR-like family. MurNAc-6-P etherase subfamily. In terms of assembly, homodimer.

It catalyses the reaction N-acetyl-D-muramate 6-phosphate + H2O = N-acetyl-D-glucosamine 6-phosphate + (R)-lactate. It functions in the pathway amino-sugar metabolism; 1,6-anhydro-N-acetylmuramate degradation. It participates in amino-sugar metabolism; N-acetylmuramate degradation. Its pathway is cell wall biogenesis; peptidoglycan recycling. Its function is as follows. Specifically catalyzes the cleavage of the D-lactyl ether substituent of MurNAc 6-phosphate, producing GlcNAc 6-phosphate and D-lactate. Together with AnmK, is also required for the utilization of anhydro-N-acetylmuramic acid (anhMurNAc) either imported from the medium or derived from its own cell wall murein, and thus plays a role in cell wall recycling. The protein is N-acetylmuramic acid 6-phosphate etherase of Escherichia coli O8 (strain IAI1).